The chain runs to 415 residues: Serine/threonine transporter SstT (415 aa).

The next 9 membrane-spanning stretches (helical) occupy residues 21–41 (ILLGLAAGIILASLSTQAALA), 45–65 (LGTLFVGALKAVAPILVLMLV), 83–103 (ILFLYLIGTFSAALIAVVLSV), 142–162 (ALLNANYIGILVWAVGLGLAF), 193–213 (LGIFGLVASTLAETGFGALWG), 217–237 (LLMVLIGGMLLVALVINPLIV), 299–319 (MAGAAITITVLALAAVHTLGI), 331–351 (VVASICACGASGVAGGSLLLI), and 358–378 (FGISNDIAMQVVAVGFIIGVL).

It belongs to the dicarboxylate/amino acid:cation symporter (DAACS) (TC 2.A.23) family.

It is found in the cell inner membrane. The enzyme catalyses L-serine(in) + Na(+)(in) = L-serine(out) + Na(+)(out). It catalyses the reaction L-threonine(in) + Na(+)(in) = L-threonine(out) + Na(+)(out). Involved in the import of serine and threonine into the cell, with the concomitant import of sodium (symport system). The protein is Serine/threonine transporter SstT of Pectobacterium carotovorum subsp. carotovorum (strain PC1).